We begin with the raw amino-acid sequence, 227 residues long: TMF-regulated nuclear protein 1 (227 aa).

Disordered stretches follow at residues 1-72 (MPGC…ELQR) and 200-227 (GRLRRGHGPEPDSPFRRSPPRGPASPQR). Residues 22–55 (SPPPPWDPMPSSQPPPPTPTLTPTPTPGQSPPLP) show a composition bias toward pro residues.

Interacts with TMF1; may regulate TRNP1 proteasomal degradation. Ubiquitinated, leading to its degradation by the proteasome.

Its subcellular location is the nucleus. Functionally, DNA-binding factor that regulates the expression of a subset of genes and plays a key role in tangential, radial, and lateral expansion of the brain neocortex. Regulates neural stem cells proliferation and the production of intermediate neural progenitors and basal radial glial cells affecting the process of cerebral cortex gyrification. May control the proliferation rate of cells by regulating their progression through key cell-cycle transition points. In Homo sapiens (Human), this protein is TMF-regulated nuclear protein 1 (TRNP1).